A 558-amino-acid chain; its full sequence is 2-isopropylmalate synthase (558 aa).

Positions 31–306 (PIWCAVDLRD…DPGIDFSNID (276 aa)) constitute a Pyruvate carboxyltransferase domain. Mg(2+) contacts are provided by Asp-40, His-245, His-247, and Asn-281. The regulatory domain stretch occupies residues 440–558 (AGSPYSFLEH…LCAANHLSDK (119 aa)).

It belongs to the alpha-IPM synthase/homocitrate synthase family. LeuA type 2 subfamily. In terms of assembly, homodimer. Requires Mg(2+) as cofactor.

Its subcellular location is the cytoplasm. It catalyses the reaction 3-methyl-2-oxobutanoate + acetyl-CoA + H2O = (2S)-2-isopropylmalate + CoA + H(+). It functions in the pathway amino-acid biosynthesis; L-leucine biosynthesis; L-leucine from 3-methyl-2-oxobutanoate: step 1/4. In terms of biological role, catalyzes the condensation of the acetyl group of acetyl-CoA with 3-methyl-2-oxobutanoate (2-ketoisovalerate) to form 3-carboxy-3-hydroxy-4-methylpentanoate (2-isopropylmalate). The chain is 2-isopropylmalate synthase from Rhodospirillum rubrum (strain ATCC 11170 / ATH 1.1.1 / DSM 467 / LMG 4362 / NCIMB 8255 / S1).